Consider the following 569-residue polypeptide: MLTDMDISRRADLKDIAALGAEFGLLPDEMQLFGKTKAKVDLRVQQRLAEQQGKLIIVTAVTPTPHGEGKTVTTIGLTQSLKALGNKVCACIRQPSMGPVFGVKGGAAGGGYAQVVPMQELNLHLTGDIHAVSSAHNLGAAAIASRLYHETRLGKAEFELQSGQNYLDIAPNGIRWHRVVDHNDRCLREIEVGLGENNGPAYTSGFDITAASELMAILALSRNLADMRARIGKLVLAVNRQGAAISAEDLGVAGAMTALMADAVKPTLMQTLNGAPCLIHAGPFANIAHGNSSVIADDIALKLADFVVTEGGFGSDMGFEKFCNIKARQSGLAPSTAVLVTTLKALKANSGLTSDADINAPDQARLEAGFANLNWHINNVARYGIPVVVAINRFATDTDAELNWLIEAVSGTAAFGCELSETFSQGEAGALALAQTVMRACEQPSEFTLLYPDDMALEAKLSTLAEVGYGAAGVSLSEAAKLQLQELSALGYAHLPVCMAKTPLSISHDPQLKGVPQGFIVPVRELVLNAGAGFITALVGNVMTMPGLGLVPGYLKIDIGADGEITGLG.

64–71 (TPHGEGKT) serves as a coordination point for ATP.

Belongs to the formate--tetrahydrofolate ligase family.

It catalyses the reaction (6S)-5,6,7,8-tetrahydrofolate + formate + ATP = (6R)-10-formyltetrahydrofolate + ADP + phosphate. It participates in one-carbon metabolism; tetrahydrofolate interconversion. This chain is Formate--tetrahydrofolate ligase, found in Shewanella sp. (strain MR-7).